The sequence spans 329 residues: Flotillin-like protein FloA (329 aa).

Transmembrane regions (helical) follow at residues 4–24 and 26–46; these read IGFI…FSFV and VGLW…TLVG.

It belongs to the flotillin-like FloA family. As to quaternary structure, homooligomerizes.

It localises to the cell membrane. The protein resides in the membrane raft. Functionally, found in functional membrane microdomains (FMM) that may be equivalent to eukaryotic membrane rafts. FMMs are highly dynamic and increase in number as cells age. Flotillins are thought to be important factors in membrane fluidity. This chain is Flotillin-like protein FloA, found in Staphylococcus epidermidis (strain ATCC 35984 / DSM 28319 / BCRC 17069 / CCUG 31568 / BM 3577 / RP62A).